The following is a 1255-amino-acid chain: Cilia- and flagella-associated protein 337 B (1255 aa).

Positions 87–122 (KLVRCLTNLFEEIDLNGNGILEWDEFTNYVIEKATV) constitute an EF-hand domain. Ca(2+) is bound by residues aspartate 100, asparagine 102, asparagine 104, and glutamate 111. 12 WD repeats span residues 228 to 269 (DLKT…WVLA), 282 to 322 (EFKN…KELE), 326 to 365 (AHTE…KKRV), 368 to 407 (EHTR…LIYK), 410 to 449 (GHSS…NVQC), 496 to 536 (VDDY…KIFS), 538 to 577 (VTQG…MIKA), 580 to 624 (KHSA…RTLE), 625 to 664 (LKDV…QNGS), 669 to 708 (TQYE…FKFQ), 769 to 808 (QQNL…TILE), and 844 to 883 (AHYE…LIDQ). Disordered regions lie at residues 941 to 988 (IKSL…NFNP) and 1140 to 1160 (QQQV…QQPG). Over residues 953–969 (TQESSTQEQEAAQQPQQ) the composition is skewed to low complexity. A compositionally biased stretch (polar residues) spans 1148–1160 (TEPSSNRSHQQPG).

The protein belongs to the CFAP337 family. In terms of assembly, associates with components of the nexin-dynein regulatory complex (N-DRC) and the CFAP184:CFAP263 complex.

It is found in the cell projection. It localises to the cilium. In terms of biological role, associates with components of the nexin-dynein regulatory complex (N-DRC), a key regulator of ciliary/flagellar motility, and might act as an inner dynein arm (IDA) hub or linkage. The polypeptide is Cilia- and flagella-associated protein 337 B (Tetrahymena thermophila (strain SB210)).